The following is a 176-amino-acid chain: ATP-dependent protease subunit HslV (176 aa).

Residue Thr6 is part of the active site. Positions 161, 164, and 167 each coordinate Na(+).

This sequence belongs to the peptidase T1B family. HslV subfamily. As to quaternary structure, a double ring-shaped homohexamer of HslV is capped on each side by a ring-shaped HslU homohexamer. The assembly of the HslU/HslV complex is dependent on binding of ATP.

It localises to the cytoplasm. The catalysed reaction is ATP-dependent cleavage of peptide bonds with broad specificity.. Its activity is regulated as follows. Allosterically activated by HslU binding. Functionally, protease subunit of a proteasome-like degradation complex believed to be a general protein degrading machinery. The chain is ATP-dependent protease subunit HslV from Thermosipho melanesiensis (strain DSM 12029 / CIP 104789 / BI429).